The following is a 455-amino-acid chain: Bifunctional protein GlmU (455 aa).

A pyrophosphorylase region spans residues 1-225 (MNIVILAAGM…EWETLGVNSK (225 aa)). Residues 6–9 (LAAG), Lys-20, Gln-71, 76–77 (GT), 98–100 (YGD), Gly-135, Glu-150, Asn-165, and Asn-223 contribute to the UDP-N-acetyl-alpha-D-glucosamine site. Position 100 (Asp-100) interacts with Mg(2+). Asn-223 provides a ligand contact to Mg(2+). The linker stretch occupies residues 226-246 (VQLAELERIHQRNLAQQLLED). The N-acetyltransferase stretch occupies residues 247-455 (GVTLIDPARI…QRPVKQKKEG (209 aa)). 2 residues coordinate UDP-N-acetyl-alpha-D-glucosamine: Arg-329 and Lys-347. His-359 serves as the catalytic Proton acceptor. UDP-N-acetyl-alpha-D-glucosamine-binding residues include Tyr-362 and Asn-373. Residues Ala-376, 382–383 (NY), Ser-401, Ala-419, and Arg-436 each bind acetyl-CoA.

The protein in the N-terminal section; belongs to the N-acetylglucosamine-1-phosphate uridyltransferase family. This sequence in the C-terminal section; belongs to the transferase hexapeptide repeat family. In terms of assembly, homotrimer. The cofactor is Mg(2+).

The protein resides in the cytoplasm. The enzyme catalyses alpha-D-glucosamine 1-phosphate + acetyl-CoA = N-acetyl-alpha-D-glucosamine 1-phosphate + CoA + H(+). It carries out the reaction N-acetyl-alpha-D-glucosamine 1-phosphate + UTP + H(+) = UDP-N-acetyl-alpha-D-glucosamine + diphosphate. It functions in the pathway nucleotide-sugar biosynthesis; UDP-N-acetyl-alpha-D-glucosamine biosynthesis; N-acetyl-alpha-D-glucosamine 1-phosphate from alpha-D-glucosamine 6-phosphate (route II): step 2/2. The protein operates within nucleotide-sugar biosynthesis; UDP-N-acetyl-alpha-D-glucosamine biosynthesis; UDP-N-acetyl-alpha-D-glucosamine from N-acetyl-alpha-D-glucosamine 1-phosphate: step 1/1. It participates in bacterial outer membrane biogenesis; LPS lipid A biosynthesis. In terms of biological role, catalyzes the last two sequential reactions in the de novo biosynthetic pathway for UDP-N-acetylglucosamine (UDP-GlcNAc). The C-terminal domain catalyzes the transfer of acetyl group from acetyl coenzyme A to glucosamine-1-phosphate (GlcN-1-P) to produce N-acetylglucosamine-1-phosphate (GlcNAc-1-P), which is converted into UDP-GlcNAc by the transfer of uridine 5-monophosphate (from uridine 5-triphosphate), a reaction catalyzed by the N-terminal domain. The protein is Bifunctional protein GlmU of Ralstonia pickettii (strain 12J).